A 152-amino-acid chain; its full sequence is 3-hydroxyacyl-[acyl-carrier-protein] dehydratase FabZ (152 aa).

His58 is a catalytic residue.

This sequence belongs to the thioester dehydratase family. FabZ subfamily.

It is found in the cytoplasm. It carries out the reaction a (3R)-hydroxyacyl-[ACP] = a (2E)-enoyl-[ACP] + H2O. In terms of biological role, involved in unsaturated fatty acids biosynthesis. Catalyzes the dehydration of short chain beta-hydroxyacyl-ACPs and long chain saturated and unsaturated beta-hydroxyacyl-ACPs. In Prochlorococcus marinus (strain AS9601), this protein is 3-hydroxyacyl-[acyl-carrier-protein] dehydratase FabZ.